Consider the following 205-residue polypeptide: Probable GTP-binding protein EngB (205 aa).

The 175-residue stretch at 27–201 (SGIEIAFAGR…AAKLDSWFAP (175 aa)) folds into the EngB-type G domain. GTP is bound by residues 35–42 (GRSNAGKS), 62–66 (GRTQL), 80–83 (DLPG), 147–150 (TKAD), and 180–182 (FSA). Mg(2+) contacts are provided by S42 and T64.

The protein belongs to the TRAFAC class TrmE-Era-EngA-EngB-Septin-like GTPase superfamily. EngB GTPase family. It depends on Mg(2+) as a cofactor.

Necessary for normal cell division and for the maintenance of normal septation. This chain is Probable GTP-binding protein EngB, found in Pasteurella multocida (strain Pm70).